A 136-amino-acid chain; its full sequence is Histone H3.3 (136 aa).

Positions 1-42 (MARTKQTARKSTGGKAPRKQLASKAARKSAPVSGGVKKPHRY) are disordered. The residue at position 5 (lysine 5) is an N6,N6,N6-trimethyllysine; alternate. Position 5 is an N6,N6-dimethyllysine; alternate (lysine 5). 2 positions are modified to N6-methyllysine; alternate: lysine 5 and lysine 10. Lysine 10 is subject to N6-acetyllysine; alternate. Phosphoserine is present on serine 11. N6,N6-dimethyllysine; alternate is present on lysine 15. Lysine 15, lysine 19, lysine 24, lysine 28, and lysine 37 each carry N6-acetyllysine; alternate. N6-methyllysine; alternate occurs at positions 19, 24, 28, and 37. N6,N6,N6-trimethyllysine; alternate is present on residues lysine 28 and lysine 37. N6,N6-dimethyllysine; alternate is present on residues lysine 28 and lysine 37. N6-acetyllysine occurs at positions 57 and 65. Lysine 80 carries the post-translational modification N6,N6,N6-trimethyllysine; alternate. An N6,N6-dimethyllysine; alternate modification is found at lysine 80. Lysine 80 carries the N6-methyllysine; alternate modification.

This sequence belongs to the histone H3 family. In terms of assembly, the nucleosome is a histone octamer containing two molecules each of H2A, H2B, H3 and H4 assembled in one H3-H4 heterotetramer and two H2A-H2B heterodimers. The octamer wraps approximately 147 bp of DNA. In terms of processing, phosphorylated by IPL1 to form H3S10ph. H3S10ph promotes subsequent H3K14ac formation by GCN5 and is required for transcriptional activation through TBP recruitment to the promoters. Post-translationally, mono-, di- and trimethylated by the COMPASS complex to form H3K4me1/2/3. H3K4me activates gene expression by regulating transcription elongation and plays a role in telomere length maintenance. H3K4me enrichment correlates with transcription levels, and occurs in a 5' to 3' gradient with H3K4me3 enrichment at the 5'-end of genes, shifting to H3K4me2 and then H3K4me1. Methylated by SET2 to form H3K36me. H3K36me represses gene expression. Methylated by DOT1 to form H3K79me. H3K79me is required for association of SIR proteins with telomeric regions and for telomeric silencing. The COMPASS-mediated formation of H3K4me2/3 and the DOT1-mediated formation of H3K79me require H2BK123ub1. Acetylation of histone H3 leads to transcriptional activation. H3K14ac formation by GCN5 is promoted by H3S10ph. H3K14ac can also be formed by ESA1. H3K56ac formation occurs predominantly in newly synthesized H3 molecules during G1, S and G2/M of the cell cycle and may be involved in DNA repair.

It localises to the nucleus. The protein resides in the chromosome. In terms of biological role, core component of nucleosome. Nucleosomes wrap and compact DNA into chromatin, limiting DNA accessibility to the cellular machineries which require DNA as a template. Histones thereby play a central role in transcription regulation, DNA repair, DNA replication and chromosomal stability. DNA accessibility is regulated via a complex set of post-translational modifications of histones, also called histone code, and nucleosome remodeling. The chain is Histone H3.3 (HHT3) from Debaryomyces hansenii (strain ATCC 36239 / CBS 767 / BCRC 21394 / JCM 1990 / NBRC 0083 / IGC 2968) (Yeast).